The following is a 78-amino-acid chain: Beta-defensin 135 (78 aa).

The signal sequence occupies residues 1-24; it reads MATRSVLLALVVLNLLFYVPPGRS. Intrachain disulfides connect Cys-37–Cys-64 and Cys-48–Cys-66.

Belongs to the beta-defensin family.

The protein localises to the secreted. Its function is as follows. Has antibacterial activity. The chain is Beta-defensin 135 (DEFB135) from Pan troglodytes (Chimpanzee).